The sequence spans 253 residues: UDP-Glc:alpha-D-GlcNAc-diphosphoundecaprenol beta-1,3-glucosyltransferase WfgD (253 aa).

This sequence belongs to the glycosyltransferase 2 family. It depends on Mn(2+) as a cofactor. Mg(2+) is required as a cofactor.

Its subcellular location is the cell inner membrane. It catalyses the reaction N-acetyl-alpha-D-glucosaminyl-di-trans,octa-cis-undecaprenyl diphosphate + UDP-alpha-D-glucose = beta-D-Glc-(1-&gt;3)-alpha-D-GlcNAc-di-trans,octa-cis-undecaprenyl diphosphate + UDP + H(+). It functions in the pathway bacterial outer membrane biogenesis; lipopolysaccharide biosynthesis. Catalyzes the addition of Glc, the second sugar moiety of the O152-antigen repeating unit, to GlcNAc-pyrophosphate-undecaprenol. The protein is UDP-Glc:alpha-D-GlcNAc-diphosphoundecaprenol beta-1,3-glucosyltransferase WfgD (wfgD) of Escherichia coli.